The sequence spans 262 residues: MIHPSAKIHPTALIEEGAVIGEDVFIGPFCIVEGTVEIKARTVLKSHVVVRGDTVIGEDNEIYQFTSIGEVNQDLKYKGEATKTIIGNSNKIREHVTIHRGTIQGCGVTAIGNNNLLMINVHVAHDCQIKNNCILANNATLAGHVELDDFVIVGGMSAIHQFVIVGAHVMLGGGSMVSQDVPPYVMAQGNHARPFGVNLEGLKRRGFDKPTMHAIRNIYKMIYRSGKTLEEVLPEIEQIAETDSAISFFVEFFKRSTRGIIR.

The protein belongs to the transferase hexapeptide repeat family. LpxA subfamily. In terms of assembly, homotrimer.

It localises to the cytoplasm. It catalyses the reaction a (3R)-hydroxyacyl-[ACP] + UDP-N-acetyl-alpha-D-glucosamine = a UDP-3-O-[(3R)-3-hydroxyacyl]-N-acetyl-alpha-D-glucosamine + holo-[ACP]. The protein operates within glycolipid biosynthesis; lipid IV(A) biosynthesis; lipid IV(A) from (3R)-3-hydroxytetradecanoyl-[acyl-carrier-protein] and UDP-N-acetyl-alpha-D-glucosamine: step 1/6. Involved in the biosynthesis of lipid A, a phosphorylated glycolipid that anchors the lipopolysaccharide to the outer membrane of the cell. The protein is Acyl-[acyl-carrier-protein]--UDP-N-acetylglucosamine O-acyltransferase of Haemophilus influenzae (strain PittEE).